The primary structure comprises 184 residues: MIYPIVAYGDPVLKKVAQDIEKGSLDVVKMSADMFETMENAHGVGLAAPQVALNLRMFVIDTSVFDDEKITPVRKTFINPVIEEEWGDEWPYEEGCLSIPGVRADVYRPANLRIRYFDTDWKEHVEEFDGMTARVIQHEYDHIEGVLFVDHLSSIKKRLLKGKLTNISKGDCDASYRMKFPIKK.

Fe cation-binding residues include cysteine 96 and histidine 138. Glutamate 139 is an active-site residue. Histidine 142 contributes to the Fe cation binding site.

The protein belongs to the polypeptide deformylase family. Fe(2+) serves as cofactor.

It carries out the reaction N-terminal N-formyl-L-methionyl-[peptide] + H2O = N-terminal L-methionyl-[peptide] + formate. Removes the formyl group from the N-terminal Met of newly synthesized proteins. Requires at least a dipeptide for an efficient rate of reaction. N-terminal L-methionine is a prerequisite for activity but the enzyme has broad specificity at other positions. This Cytophaga hutchinsonii (strain ATCC 33406 / DSM 1761 / CIP 103989 / NBRC 15051 / NCIMB 9469 / D465) protein is Peptide deformylase.